A 168-amino-acid chain; its full sequence is Endoribonuclease YbeY (168 aa).

Zn(2+) is bound by residues His126, His130, and His136.

It belongs to the endoribonuclease YbeY family. Zn(2+) serves as cofactor.

The protein localises to the cytoplasm. In terms of biological role, single strand-specific metallo-endoribonuclease involved in late-stage 70S ribosome quality control and in maturation of the 3' terminus of the 16S rRNA. This Rhizobium meliloti (strain 1021) (Ensifer meliloti) protein is Endoribonuclease YbeY.